We begin with the raw amino-acid sequence, 2549 residues long: Serine/threonine-protein kinase mTOR (2549 aa).

N-acetylmethionine is present on M1. Residues 1–651 (MLGTGPATAT…HVVSQTAVQV (651 aa)) are interaction with NBN. HEAT repeat units follow at residues 16-53 (SSNV…MELR), 55-99 (MSQE…VEGG), 100-137 (NSTR…AMAG), 138-179 (DTFT…AISV), 180-220 (PTFF…LILT), 222-276 (QREP…RISS), 277-313 (MEGE…PRHI), 314-364 (TPFT…CCRD), 365-409 (LMEE…AFTD), 410-445 (TQYL…VAVR), 446-494 (SEFK…RAMG), 495-529 (PGIQ…RQIP), 530-563 (QLKK…GLAH), 564-596 (QLAS…EFEG), 597-636 (HSLT…SIHL), 637-683 (ISGH…DERF), 686-724 (HLAQ…MNPA), 727-766 (MPFL…NAPR), 769-811 (RPYM…VSGL), 814-853 (RKWV…STGY), 857-893 (PYRK…LLGA), 894-942 (LDPY…GNLP), 943-988 (LDEF…KCVQ), 989-1027 (FLPQ…KSHI), 1029-1068 (PYMD…GEFK), 1069-1105 (LYLP…LFGA), 1106-1144 (NLDD…RLTE), 1145-1188 (SLDF…GKKY), 1189-1225 (QIFI…LADE), 1226-1273 (EEDP…GAAR), 1274-1311 (RVSK…QAYN), and 1312-1345 (PMAR…ELAL). Position 567 is a phosphoserine (S567). T1162 carries the post-translational modification Phosphothreonine. K1218 bears the N6-acetyllysine mark. S1261 bears the Phosphoserine mark. 16 TPR repeats span residues 1346–1382 (TSQD…GIVL), 1383–1408 (LGER…QKGP), 1409–1442 (TPAI…HFGE), 1443–1473 (LEIQ…NKDD), 1474–1507 (PELM…VNDE), 1508–1541 (TQAK…RDTH), 1542–1574 (DGAF…LDAE), 1575–1614 (LTAM…RREI), 1615–1649 (IRQI…PHED), 1650–1693 (MRTW…PTVH), 1694–1731 (PQVT…AQHA), 1732–1786 (IATE…DRSW), 1787–1846 (YKAW…STEG), 1898–1930 (NNLQ…VKAI), 1931–1970 (QIDT…YHPQ), and 1971–2005 (ALIY…SNTL). Residues 1382-1982 (LLGERAAKCR…IYPLTVASKS (601 aa)) enclose the FAT domain. 1D-myo-inositol hexakisphosphate is bound by residues K1662, K1702, and R1749. A disordered region spans residues 1812–1867 (DEKKKLRHASGANITNATTTATTAASAAAATSTEGSNSESEAESNESSPTPSPLQK). Residues 1826–1860 (TNATTTATTAASAAAATSTEGSNSESEAESNESSP) show a composition bias toward low complexity. The tract at residues 2012–2144 (VSEELIRVAI…DLELAVPGTY (133 aa)) is sufficient for interaction with the FKBP1A/rapamycin complex. Residue K2066 forms a Glycyl lysine isopeptide (Lys-Gly) (interchain with G-Cter in ubiquitin) linkage. Residues 2156 to 2469 (IAPSLQVITS…GVELGEPAHK (314 aa)) form the PI3K/PI4K catalytic domain. Residue S2159 is modified to Phosphoserine. A G-loop region spans residues 2162 to 2168 (VITSKQR). Phosphothreonine is present on T2164. Residues S2165 and Q2167 each coordinate ATP. T2173 is modified (phosphothreonine; by PKB/AKT1). Positions 2185, 2187, 2190, 2225, 2238, 2239, 2240, and 2245 each coordinate ATP. The interaction with MLST8 stretch occupies residues 2258 to 2296 (KILLNIEHRIMLRMAPDYDHLTLMQKVEVFEHAVNNTAG). The interval 2335-2343 (GLGDRHPSN) is catalytic loop. N2343 lines the Mg(2+) pocket. M2345 and I2356 together coordinate ATP. Residues 2355 to 2380 (HIDFGDCFEVAMTREKFPEKIPFRLT) form an activation loop region. A Mg(2+)-binding site is contributed by D2357. T2446 carries the phosphothreonine; by RPS6KB1 modification. At S2448 the chain carries Phosphoserine; by RPS6KB1. S2478 bears the Phosphoserine mark. S2481 bears the Phosphoserine; by autocatalysis mark. The FATC domain maps to 2517 to 2549 (DTLDVPTQVELLIKQATSHENLCQCYIGWCPFW).

Belongs to the PI3/PI4-kinase family. In terms of assembly, part of the mechanistic target of rapamycin complex 1 (mTORC1) which contains MTOR, MLST8 and RPTOR. The mTORC1 complex is a 1 Md obligate dimer of two stoichiometric heterotetramers with overall dimensions of 290 A x 210 A x 135 A. It has a rhomboid shape and a central cavity, the dimeric interfaces are formed by interlocking interactions between the two MTOR and the two RPTOR subunits. The MLST8 subunit forms distal foot-like protuberances, and contacts only one MTOR within the complex, while the small AKT1S1/PRAS40 localizes to the midsection of the central core, in close proximity to RPTOR. mTORC1 associates with AKT1S1/PRAS40, which inhibits its activity by blocking MTOR substrate-recruitment site. Component of the mechanistic target of rapamycin complex 2 (mTORC2), consisting in two heterotretramers composed of MTOR, MLST8, RICTOR and MAPKAP1/SIN1. Interacts with PLPP7 and PML. Interacts with PRR5 and RICTOR; the interaction is direct within the mTORC2 complex and interaction with RICTOR is enhanced by deubiquitination of RICTOR by USP9X. mTORC1 and mTORC2 associate with DEPTOR, which regulates their activity. Interacts with WAC; WAC positively regulates MTOR activity by promoting the assembly of the TTT complex composed of TELO2, TTI1 and TTI2 and the RUVBL complex composed of RUVBL1 and RUVBL2 into the TTT-RUVBL complex which leads to the dimerization of the mTORC1 complex and its subsequent activation. Interacts with UBQLN1. Interacts with TTI1 and TELO2. Interacts with CLIP1; phosphorylates and regulates CLIP1. Interacts with NBN. Interacts with HTR6. Interacts with BRAT1. Interacts with MEAK7 (via C-terminal domain); the interaction increases upon nutrient stimulation. Interacts with TM4SF5; the interaction is positively regulated by arginine and is negatively regulated by leucine. Interacts with GPR137B. Interacts with NCKAP1L. Interacts with TPCN1 and TPCN2; the interaction is required for TPCN1 and TPCN2 sensitivity to ATP. Interacts with ATP6V1A and with CRYAB, forming a ternary complex. Interacts with SLC38A7; this interaction mediates the recruitment of mTORC1 to the lysosome and its subsequent activation. Interacts with TSPAN8. Post-translationally, autophosphorylates when part of mTORC1 or mTORC2. Phosphorylation at Ser-1261, Ser-2159 and Thr-2164 promotes autophosphorylation. Phosphorylated at Ser-2448 by RPS6KB1. Phosphorylation in the kinase domain modulates the interactions of MTOR with RPTOR and AKT1S1/PRAS40 and leads to increased intrinsic mTORC1 kinase activity. Phosphorylation at Ser-2159 by TBK1 in response to growth factors and pathogen recognition receptors promotes mTORC1 activity. Phosphorylation at Ser-2159 by TBK1 in response to EGF growth factor promotes mTORC2 activity, leading to AKT1 phosphorylation and activation. Phosphorylation at Thr-2173 in the ATP-binding region by AKT1 strongly reduces kinase activity. In terms of processing, ubiquitinated at Lys-2066 by the SCF(FBXO22) complex via 'Lys-27'-linked ubiquitination prevents mTORC1 substrate recruitment.

The protein resides in the lysosome membrane. It localises to the endoplasmic reticulum membrane. The protein localises to the golgi apparatus membrane. It is found in the cell membrane. Its subcellular location is the mitochondrion outer membrane. The protein resides in the cytoplasm. It localises to the nucleus. The protein localises to the PML body. It is found in the microsome membrane. Its subcellular location is the cytoplasmic vesicle. The protein resides in the phagosome. It catalyses the reaction L-seryl-[protein] + ATP = O-phospho-L-seryl-[protein] + ADP + H(+). The enzyme catalyses L-threonyl-[protein] + ATP = O-phospho-L-threonyl-[protein] + ADP + H(+). It carries out the reaction L-tyrosyl-[protein] + ATP = O-phospho-L-tyrosyl-[protein] + ADP + H(+). With respect to regulation, the mTORC1 complex is activated in response to nutrients, growth factors or amino acids: activation requires relocalization of the mTORC1 complex to lysosomes that is mediated by the Ragulator complex, SLC38A9, and the Rag GTPases RagA/RRAGA, RagB/RRAGB, RagC/RRAGC and RagD/RRAGD. Activation of mTORC1 by growth factors such as insulin involves AKT1-mediated phosphorylation of TSC1-TSC2, which leads to the activation of the RHEB GTPase a potent activator of the protein kinase activity of mTORC1. Insulin-stimulated and amino acid-dependent phosphorylation at Ser-1261 promotes autophosphorylation and the activation of mTORC1. On the other hand, low cellular energy levels can inhibit mTORC1 through activation of PRKAA1 while hypoxia inhibits mTORC1 through a REDD1-dependent mechanism which may also require PRKAA1. The kinase activity of MTOR within the mTORC1 complex is positively regulated by MLST8. The kinase activity of MTOR is inhibited by DEPTOR and AKT1S1. The non-canonical mTORC1 complex is independent of the RHEB GTPase and specifically mediates phosphorylation of MiT/TFE factors TFEB and TFE3 but not other mTORC1 substrates: it is activated by FLCN, which activates Rag GTPases RagC/RRAGC and RagD/RRAGD. MTOR is the target of the immunosuppressive and anti-cancer drug rapamycin which acts in complex with FKBP1A/FKBP12, and specifically inhibits its kinase activity. mTORC2 is also activated by growth factors, but seems to be nutrient-insensitive. mTORC2 associates and is directly activated by ribosomes. mTORC2 may also be regulated by RHEB but in an indirect manner through the PI3K signaling pathway. Serine/threonine protein kinase which is a central regulator of cellular metabolism, growth and survival in response to hormones, growth factors, nutrients, energy and stress signals. MTOR directly or indirectly regulates the phosphorylation of at least 800 proteins. Functions as part of 2 structurally and functionally distinct signaling complexes mTORC1 and mTORC2 (mTOR complex 1 and 2). In response to nutrients, growth factors or amino acids, mTORC1 is recruited to the lysosome membrane and promotes protein, lipid and nucleotide synthesis by phosphorylating key regulators of mRNA translation and ribosome synthesis. This includes phosphorylation of EIF4EBP1 and release of its inhibition toward the elongation initiation factor 4E (eiF4E). Moreover, phosphorylates and activates RPS6KB1 and RPS6KB2 that promote protein synthesis by modulating the activity of their downstream targets including ribosomal protein S6, eukaryotic translation initiation factor EIF4B, and the inhibitor of translation initiation PDCD4. Stimulates the pyrimidine biosynthesis pathway, both by acute regulation through RPS6KB1-mediated phosphorylation of the biosynthetic enzyme CAD, and delayed regulation, through transcriptional enhancement of the pentose phosphate pathway which produces 5-phosphoribosyl-1-pyrophosphate (PRPP), an allosteric activator of CAD at a later step in synthesis, this function is dependent on the mTORC1 complex. Regulates ribosome synthesis by activating RNA polymerase III-dependent transcription through phosphorylation and inhibition of MAF1 an RNA polymerase III-repressor. Activates dormant ribosomes by mediating phosphorylation of SERBP1, leading to SERBP1 inactivation and reactivation of translation. In parallel to protein synthesis, also regulates lipid synthesis through SREBF1/SREBP1 and LPIN1. To maintain energy homeostasis mTORC1 may also regulate mitochondrial biogenesis through regulation of PPARGC1A. In the same time, mTORC1 inhibits catabolic pathways: negatively regulates autophagy through phosphorylation of ULK1. Under nutrient sufficiency, phosphorylates ULK1 at 'Ser-758', disrupting the interaction with AMPK and preventing activation of ULK1. Also prevents autophagy through phosphorylation of the autophagy inhibitor DAP. Also prevents autophagy by phosphorylating RUBCNL/Pacer under nutrient-rich conditions. Prevents autophagy by mediating phosphorylation of AMBRA1, thereby inhibiting AMBRA1 ability to mediate ubiquitination of ULK1 and interaction between AMBRA1 and PPP2CA. mTORC1 exerts a feedback control on upstream growth factor signaling that includes phosphorylation and activation of GRB10 a INSR-dependent signaling suppressor. Among other potential targets mTORC1 may phosphorylate CLIP1 and regulate microtubules. The mTORC1 complex is inhibited in response to starvation and amino acid depletion. The non-canonical mTORC1 complex, which acts independently of RHEB, specifically mediates phosphorylation of MiT/TFE factors TFEB and TFE3 in the presence of nutrients, promoting their cytosolic retention and inactivation. Upon starvation or lysosomal stress, inhibition of mTORC1 induces dephosphorylation and nuclear translocation of TFEB and TFE3, promoting their transcription factor activity. The mTORC1 complex regulates pyroptosis in macrophages by promoting GSDMD oligomerization. MTOR phosphorylates RPTOR which in turn inhibits mTORC1. As part of the mTORC2 complex, MTOR transduces signals from growth factors to pathways involved in proliferation, cytoskeletal organization, lipogenesis and anabolic output. In response to growth factors, mTORC2 phosphorylates and activates AGC protein kinase family members, including AKT (AKT1, AKT2 and AKT3), PKC (PRKCA, PRKCB and PRKCE) and SGK1. In contrast to mTORC1, mTORC2 is nutrient-insensitive. mTORC2 plays a critical role in AKT1 activation by mediating phosphorylation of different sites depending on the context, such as 'Thr-450', 'Ser-473', 'Ser-477' or 'Thr-479', facilitating the phosphorylation of the activation loop of AKT1 on 'Thr-308' by PDPK1/PDK1 which is a prerequisite for full activation. mTORC2 also regulates the phosphorylation of SGK1 at 'Ser-422'. mTORC2 may regulate the actin cytoskeleton, through phosphorylation of PRKCA, PXN and activation of the Rho-type guanine nucleotide exchange factors RHOA and RAC1A or RAC1B. The mTORC2 complex also phosphorylates various proteins involved in insulin signaling, such as FBXW8 and IGF2BP1. May also regulate insulin signaling by acting as a tyrosine protein kinase that catalyzes phosphorylation of IGF1R and INSR. Regulates osteoclastogenesis by adjusting the expression of CEBPB isoforms. Plays an important regulatory role in the circadian clock function; regulates period length and rhythm amplitude of the suprachiasmatic nucleus (SCN) and liver clocks. The sequence is that of Serine/threonine-protein kinase mTOR from Rattus norvegicus (Rat).